A 95-amino-acid chain; its full sequence is Citrate lyase acyl carrier protein (95 aa).

S14 carries the O-(phosphoribosyl dephospho-coenzyme A)serine modification.

Belongs to the CitD family. In terms of assembly, oligomer with a subunit composition of (alpha,beta,gamma)6.

Its subcellular location is the cytoplasm. In terms of biological role, covalent carrier of the coenzyme of citrate lyase. In Haemophilus influenzae (strain PittGG), this protein is Citrate lyase acyl carrier protein.